The primary structure comprises 97 residues: Co-chaperonin GroES (97 aa).

It belongs to the GroES chaperonin family. As to quaternary structure, heptamer of 7 subunits arranged in a ring. Interacts with the chaperonin GroEL.

It localises to the cytoplasm. Together with the chaperonin GroEL, plays an essential role in assisting protein folding. The GroEL-GroES system forms a nano-cage that allows encapsulation of the non-native substrate proteins and provides a physical environment optimized to promote and accelerate protein folding. GroES binds to the apical surface of the GroEL ring, thereby capping the opening of the GroEL channel. The chain is Co-chaperonin GroES from Blochmanniella pennsylvanica (strain BPEN).